Consider the following 468-residue polypeptide: 3-isopropylmalate dehydratase large subunit (468 aa).

[4Fe-4S] cluster is bound by residues Cys-349, Cys-409, and Cys-412.

The protein belongs to the aconitase/IPM isomerase family. LeuC type 1 subfamily. Heterodimer of LeuC and LeuD. It depends on [4Fe-4S] cluster as a cofactor.

The catalysed reaction is (2R,3S)-3-isopropylmalate = (2S)-2-isopropylmalate. It functions in the pathway amino-acid biosynthesis; L-leucine biosynthesis; L-leucine from 3-methyl-2-oxobutanoate: step 2/4. Its function is as follows. Catalyzes the isomerization between 2-isopropylmalate and 3-isopropylmalate, via the formation of 2-isopropylmaleate. The sequence is that of 3-isopropylmalate dehydratase large subunit from Nitrobacter winogradskyi (strain ATCC 25391 / DSM 10237 / CIP 104748 / NCIMB 11846 / Nb-255).